Reading from the N-terminus, the 515-residue chain is Maturase K (515 aa).

The protein belongs to the intron maturase 2 family. MatK subfamily.

Its subcellular location is the plastid. The protein resides in the chloroplast. Usually encoded in the trnK tRNA gene intron. Probably assists in splicing its own and other chloroplast group II introns. The sequence is that of Maturase K from Picea pungens (Colorado spruce).